We begin with the raw amino-acid sequence, 360 residues long: 3-isopropylmalate dehydrogenase (360 aa).

Glycine 76–glutamate 89 serves as a coordination point for NAD(+). Residues arginine 96, arginine 106, arginine 134, and aspartate 224 each contribute to the substrate site. Residues aspartate 224, aspartate 248, and aspartate 252 each contribute to the Mg(2+) site. Glycine 282 to asparagine 294 is a binding site for NAD(+).

It belongs to the isocitrate and isopropylmalate dehydrogenases family. LeuB type 1 subfamily. In terms of assembly, homodimer. Requires Mg(2+) as cofactor. It depends on Mn(2+) as a cofactor.

The protein resides in the cytoplasm. The enzyme catalyses (2R,3S)-3-isopropylmalate + NAD(+) = 4-methyl-2-oxopentanoate + CO2 + NADH. It participates in amino-acid biosynthesis; L-leucine biosynthesis; L-leucine from 3-methyl-2-oxobutanoate: step 3/4. Functionally, catalyzes the oxidation of 3-carboxy-2-hydroxy-4-methylpentanoate (3-isopropylmalate) to 3-carboxy-4-methyl-2-oxopentanoate. The product decarboxylates to 4-methyl-2 oxopentanoate. The chain is 3-isopropylmalate dehydrogenase from Pseudomonas savastanoi pv. phaseolicola (strain 1448A / Race 6) (Pseudomonas syringae pv. phaseolicola (strain 1448A / Race 6)).